A 337-amino-acid polypeptide reads, in one-letter code: tRNA N6-adenosine threonylcarbamoyltransferase (337 aa).

His-111 and His-115 together coordinate Fe cation. Substrate is bound by residues 134 to 138 (LVSGG), Asp-167, Gly-180, and Asn-272. A Fe cation-binding site is contributed by Asp-300.

The protein belongs to the KAE1 / TsaD family. Fe(2+) is required as a cofactor.

The protein resides in the cytoplasm. It catalyses the reaction L-threonylcarbamoyladenylate + adenosine(37) in tRNA = N(6)-L-threonylcarbamoyladenosine(37) in tRNA + AMP + H(+). In terms of biological role, required for the formation of a threonylcarbamoyl group on adenosine at position 37 (t(6)A37) in tRNAs that read codons beginning with adenine. Is involved in the transfer of the threonylcarbamoyl moiety of threonylcarbamoyl-AMP (TC-AMP) to the N6 group of A37, together with TsaE and TsaB. TsaD likely plays a direct catalytic role in this reaction. This is tRNA N6-adenosine threonylcarbamoyltransferase from Yersinia pseudotuberculosis serotype I (strain IP32953).